Here is a 483-residue protein sequence, read N- to C-terminus: MLTLDTLNVMLAVSEEGLIEEMIIALLASPQLAVFFEKFPRLKAAITDDVPRWREALRSRLKDARVPPELTEEVMCYQQSQLLSTPQFIVQLPQILDLLHRLNSPWAEQARQLVDANSTITSALHTLFLQRWRLSLIVQATTLNQQLLEEEREQLLSEVQERMTLSGQLEPILADNNTAAGRLWDMSAGQLKRGDYQLIVKYGEFLNEQPELKRLAEQLGRSREAKSIPRNDAQMETFRTMVREPATVPEQVDGLQQSDDILRLLPPELATLGITELEYEFYRRLVEKQLLTYRLHGESWREKVIERPVVHKDYDEQPRGPFIVCVDASGSMGGFNEQCAKAFCLALMRIALAENRRCYIMLFSTEIVRYELSGPQGIEQAIRFLSQQFRGGTDLASCFRAIMERLQSREWFDADAVVISDFIAQRLPDDVTSKVKELQRVHQHRFHAVAMSAHGKPGIMRIFDHIWRFDTGMRSRLLRRWRR.

This sequence belongs to the ViaA family. As to quaternary structure, homodimer. Interacts with RavA.

The protein localises to the cytoplasm. In terms of biological role, component of the RavA-ViaA chaperone complex, which may act on the membrane to optimize the function of some of the respiratory chains. ViaA stimulates the ATPase activity of RavA. The polypeptide is Regulatory protein ViaA (Shigella boydii serotype 18 (strain CDC 3083-94 / BS512)).